Consider the following 292-residue polypeptide: Ribosomal protein L11 methyltransferase (292 aa).

S-adenosyl-L-methionine contacts are provided by threonine 144, glycine 165, aspartate 187, and asparagine 229.

Belongs to the methyltransferase superfamily. PrmA family.

It localises to the cytoplasm. It catalyses the reaction L-lysyl-[protein] + 3 S-adenosyl-L-methionine = N(6),N(6),N(6)-trimethyl-L-lysyl-[protein] + 3 S-adenosyl-L-homocysteine + 3 H(+). Its function is as follows. Methylates ribosomal protein L11. In Pseudomonas putida (strain W619), this protein is Ribosomal protein L11 methyltransferase.